The sequence spans 287 residues: Nucleotide-binding protein HEAR2885 (287 aa).

ATP is bound at residue 8 to 15; it reads GISGSGKS. A GTP-binding site is contributed by 57-60; sequence DVRS.

The protein belongs to the RapZ-like family.

Functionally, displays ATPase and GTPase activities. The sequence is that of Nucleotide-binding protein HEAR2885 from Herminiimonas arsenicoxydans.